A 90-amino-acid polypeptide reads, in one-letter code: Essential MCU regulator, mitochondrial (90 aa).

At Met-1–Gly-48 the chain is on the mitochondrial matrix side. Residues Ile-49–Glu-76 form a helical membrane-spanning segment. At Asn-77–Asp-90 the chain is on the mitochondrial intermembrane side.

The protein belongs to the SMDT1/EMRE family. In terms of assembly, component of the uniplex complex, composed of MCU, EMRE, MICU1 and MICU2 in a 4:4:1:1 stoichiometry.

The protein localises to the mitochondrion inner membrane. In terms of biological role, essential regulatory subunit of the mitochondrial calcium uniporter complex (uniplex), a complex that mediates calcium uptake into mitochondria. Required to bridge the calcium-sensing proteins MICU1 with the calcium-conducting subunit MCU. Acts by mediating activation of MCU and retention of MICU1 to the MCU pore, in order to ensure tight regulation of the uniplex complex and appropriate responses to intracellular calcium signaling. This Tribolium castaneum (Red flour beetle) protein is Essential MCU regulator, mitochondrial (EMRE).